Here is a 465-residue protein sequence, read N- to C-terminus: A-type ATP synthase subunit B (465 aa).

It belongs to the ATPase alpha/beta chains family. As to quaternary structure, has multiple subunits with at least A(3), B(3), C, D, E, F, H, I and proteolipid K(x).

It is found in the cell membrane. Functionally, component of the A-type ATP synthase that produces ATP from ADP in the presence of a proton gradient across the membrane. The B chain is a regulatory subunit. The protein is A-type ATP synthase subunit B of Thermococcus kodakarensis (strain ATCC BAA-918 / JCM 12380 / KOD1) (Pyrococcus kodakaraensis (strain KOD1)).